Here is a 187-residue protein sequence, read N- to C-terminus: Large ribosomal subunit protein uL5 (187 aa).

Belongs to the universal ribosomal protein uL5 family. In terms of assembly, part of the 50S ribosomal subunit; part of the 5S rRNA/L5/L18/L25 subcomplex. Contacts the 5S rRNA and the P site tRNA. Forms a bridge to the 30S subunit in the 70S ribosome.

Its function is as follows. This is one of the proteins that bind and probably mediate the attachment of the 5S RNA into the large ribosomal subunit, where it forms part of the central protuberance. In the 70S ribosome it contacts protein S13 of the 30S subunit (bridge B1b), connecting the 2 subunits; this bridge is implicated in subunit movement. Contacts the P site tRNA; the 5S rRNA and some of its associated proteins might help stabilize positioning of ribosome-bound tRNAs. This is Large ribosomal subunit protein uL5 from Mycolicibacterium paratuberculosis (strain ATCC BAA-968 / K-10) (Mycobacterium paratuberculosis).